The following is a 372-amino-acid chain: Putative glutamate--cysteine ligase 2 (372 aa).

The protein belongs to the glutamate--cysteine ligase type 2 family. YbdK subfamily. Homodimer.

The enzyme catalyses L-cysteine + L-glutamate + ATP = gamma-L-glutamyl-L-cysteine + ADP + phosphate + H(+). ATP-dependent carboxylate-amine ligase which exhibits weak glutamate--cysteine ligase activity. This Escherichia coli O17:K52:H18 (strain UMN026 / ExPEC) protein is Putative glutamate--cysteine ligase 2 (ybdK).